Consider the following 303-residue polypeptide: UDP-3-O-acyl-N-acetylglucosamine deacetylase (303 aa).

Residues histidine 78, histidine 237, and aspartate 241 each contribute to the Zn(2+) site. The active-site Proton donor is the histidine 264.

Belongs to the LpxC family. Zn(2+) serves as cofactor.

It carries out the reaction a UDP-3-O-[(3R)-3-hydroxyacyl]-N-acetyl-alpha-D-glucosamine + H2O = a UDP-3-O-[(3R)-3-hydroxyacyl]-alpha-D-glucosamine + acetate. It participates in glycolipid biosynthesis; lipid IV(A) biosynthesis; lipid IV(A) from (3R)-3-hydroxytetradecanoyl-[acyl-carrier-protein] and UDP-N-acetyl-alpha-D-glucosamine: step 2/6. Its function is as follows. Catalyzes the hydrolysis of UDP-3-O-myristoyl-N-acetylglucosamine to form UDP-3-O-myristoylglucosamine and acetate, the committed step in lipid A biosynthesis. This chain is UDP-3-O-acyl-N-acetylglucosamine deacetylase, found in Saccharophagus degradans (strain 2-40 / ATCC 43961 / DSM 17024).